Consider the following 303-residue polypeptide: Diaminopimelate epimerase (303 aa).

Residue Asn14 participates in substrate binding. Positions 60-74 (PVSSAGATADAAAGR) are enriched in low complexity. The tract at residues 60–86 (PVSSAGATADAAAGRPPQPSAGRPPQP) is disordered. The segment covering 75 to 86 (PPQPSAGRPPQP) has biased composition (pro residues). Asn97 is a binding site for substrate. The active-site Proton donor is Cys106. Substrate-binding positions include 107 to 108 (GN), Asn178, Asn209, and 227 to 228 (ER). Cys236 functions as the Proton acceptor in the catalytic mechanism. Position 237-238 (237-238 (GS)) interacts with substrate.

The protein belongs to the diaminopimelate epimerase family. In terms of assembly, homodimer.

It is found in the cytoplasm. It carries out the reaction (2S,6S)-2,6-diaminopimelate = meso-2,6-diaminopimelate. It functions in the pathway amino-acid biosynthesis; L-lysine biosynthesis via DAP pathway; DL-2,6-diaminopimelate from LL-2,6-diaminopimelate: step 1/1. Its function is as follows. Catalyzes the stereoinversion of LL-2,6-diaminopimelate (L,L-DAP) to meso-diaminopimelate (meso-DAP), a precursor of L-lysine and an essential component of the bacterial peptidoglycan. The polypeptide is Diaminopimelate epimerase (Acidothermus cellulolyticus (strain ATCC 43068 / DSM 8971 / 11B)).